We begin with the raw amino-acid sequence, 425 residues long: UPF0597 protein VFMJ11_0655 (425 aa).

The protein belongs to the UPF0597 family.

This is UPF0597 protein VFMJ11_0655 from Aliivibrio fischeri (strain MJ11) (Vibrio fischeri).